We begin with the raw amino-acid sequence, 843 residues long: Alpha-L-fucosidase 2 (843 aa).

An N-terminal signal peptide occupies residues 1 to 27 (MAEKSSFFVHFSCLLLLLTIIITCGEG). Asparagine 62, asparagine 253, asparagine 365, and asparagine 605 each carry an N-linked (GlcNAc...) asparagine glycan.

Belongs to the glycosyl hydrolase 95 family. As to expression, ubiquitous. Highest expression in vascular tissues, leaf trichomes, root elongation zone and emerging lateral roots.

Its subcellular location is the secreted. It is found in the extracellular space. The protein resides in the apoplast. The catalysed reaction is an alpha-L-fucoside + H2O = L-fucose + an alcohol. Its function is as follows. Hydrolyzes alpha-1,2-linked fucose. Also active on fucosylated xyloglucan oligosaccharides. No activity with 3-fucosyllactose, p-nitrophenyl-alpha-I-fucopyranoside, lacto-N-fucopentaose II, lacto-N-fucopentaose III or alpha 1,6-fucosylated chitopentaose. Involved in apoplastic xyloglucan metabolism. This is Alpha-L-fucosidase 2 (FUC95A) from Arabidopsis thaliana (Mouse-ear cress).